The following is a 413-amino-acid chain: MAGLAPEGSQFDARQYDAKMTELLGTEQQEFFTSYDEVYESFDAMGLQENLLRGIYAYGFEKPSAIQQRGIVPFCKGLDVIQQAQSGTGKTATFCSGILQQLDYSLVECQALVLAPTRELAQQIEKVMRALGDYLGVKVHACVGGTSVREDQRILQSGVHVVVGTPGRVFDMLRRQSLRPDNIKMFVLDEADEMLSRGFKDQIYDIFQLLPPKIQVGVFSATMPPEALEITRKFMNKPVRILVKRDELTLEGIKQFYVNVDKEEWKLETLCDLYETLAITQSVIFVNTRRKVDWLTDKMRGRDHTVSATHGDMDQNTRDIIMREFRSGSSRVLITTDLLARGIDVQQVSLVINYDLPTQPENYLHRIGHSGRFGRKGVSINFVTKDDERMLFDIQKFYNVVIEELPANVADLL.

A Q motif motif is present at residues 40 to 68; sequence ESFDAMGLQENLLRGIYAYGFEKPSAIQQ. The region spanning 71–241 is the Helicase ATP-binding domain; sequence IVPFCKGLDV…RKFMNKPVRI (171 aa). ATP is bound at residue 84-91; that stretch reads AQSGTGKT. A DEAD box motif is present at residues 189–192; the sequence is DEAD. The Helicase C-terminal domain maps to 252 to 413; the sequence is GIKQFYVNVD…ELPANVADLL (162 aa).

Belongs to the DEAD box helicase family. eIF4A subfamily. As to quaternary structure, eIF4F is a multi-subunit complex, the composition of which varies with external and internal environmental conditions. It is composed of at least EIF4A, EIF4E and EIF4G.

It carries out the reaction ATP + H2O = ADP + phosphate + H(+). In terms of biological role, ATP-dependent RNA helicase which is a subunit of the eIF4F complex involved in cap recognition and is required for mRNA binding to ribosome. In the current model of translation initiation, eIF4A unwinds RNA secondary structures in the 5'-UTR of mRNAs which is necessary to allow efficient binding of the small ribosomal subunit, and subsequent scanning for the initiator codon. The polypeptide is Eukaryotic initiation factor 4A-11 (Nicotiana tabacum (Common tobacco)).